The following is a 176-amino-acid chain: Translation initiation factor IF-3 (176 aa).

This sequence belongs to the IF-3 family. Monomer.

It is found in the cytoplasm. IF-3 binds to the 30S ribosomal subunit and shifts the equilibrium between 70S ribosomes and their 50S and 30S subunits in favor of the free subunits, thus enhancing the availability of 30S subunits on which protein synthesis initiation begins. In Microcystis aeruginosa (strain NIES-843 / IAM M-2473), this protein is Translation initiation factor IF-3.